The sequence spans 147 residues: Large ribosomal subunit protein bL9 (147 aa).

It belongs to the bacterial ribosomal protein bL9 family.

In terms of biological role, binds to the 23S rRNA. In Campylobacter jejuni subsp. jejuni serotype O:6 (strain 81116 / NCTC 11828), this protein is Large ribosomal subunit protein bL9.